A 238-amino-acid chain; its full sequence is Ribonuclease PH (238 aa).

Residues Arg-86 and 124–126 (GTR) contribute to the phosphate site.

It belongs to the RNase PH family. Homohexameric ring arranged as a trimer of dimers.

It catalyses the reaction tRNA(n+1) + phosphate = tRNA(n) + a ribonucleoside 5'-diphosphate. In terms of biological role, phosphorolytic 3'-5' exoribonuclease that plays an important role in tRNA 3'-end maturation. Removes nucleotide residues following the 3'-CCA terminus of tRNAs; can also add nucleotides to the ends of RNA molecules by using nucleoside diphosphates as substrates, but this may not be physiologically important. Probably plays a role in initiation of 16S rRNA degradation (leading to ribosome degradation) during starvation. The polypeptide is Ribonuclease PH (Shigella boydii serotype 18 (strain CDC 3083-94 / BS512)).